The primary structure comprises 284 residues: 2-dehydro-3-deoxyphosphooctonate aldolase (284 aa).

This sequence belongs to the KdsA family.

Its subcellular location is the cytoplasm. The enzyme catalyses D-arabinose 5-phosphate + phosphoenolpyruvate + H2O = 3-deoxy-alpha-D-manno-2-octulosonate-8-phosphate + phosphate. Its pathway is carbohydrate biosynthesis; 3-deoxy-D-manno-octulosonate biosynthesis; 3-deoxy-D-manno-octulosonate from D-ribulose 5-phosphate: step 2/3. It participates in bacterial outer membrane biogenesis; lipopolysaccharide biosynthesis. This chain is 2-dehydro-3-deoxyphosphooctonate aldolase, found in Mannheimia succiniciproducens (strain KCTC 0769BP / MBEL55E).